A 454-amino-acid chain; its full sequence is Bifunctional protein GlmU (454 aa).

The tract at residues 1–232 (MTDRTCLSIV…VDNVIGINNR (232 aa)) is pyrophosphorylase. UDP-N-acetyl-alpha-D-glucosamine contacts are provided by residues 11–14 (LAAG), lysine 25, glutamine 78, and 83–84 (GT). Residue aspartate 108 coordinates Mg(2+). 4 residues coordinate UDP-N-acetyl-alpha-D-glucosamine: glycine 144, glutamate 158, asparagine 173, and asparagine 230. Position 230 (asparagine 230) interacts with Mg(2+). Residues 233–253 (VELAEAEAIWQQRKRREMMLA) are linker. The segment at 254–454 (GVTLIAPETV…AIKAAKTATK (201 aa)) is N-acetyltransferase. UDP-N-acetyl-alpha-D-glucosamine-binding residues include arginine 319 and lysine 337. Histidine 349 (proton acceptor) is an active-site residue. Tyrosine 352 and asparagine 363 together coordinate UDP-N-acetyl-alpha-D-glucosamine. Acetyl-CoA is bound by residues alanine 366, 372–373 (NY), serine 391, serine 409, and arginine 426.

The protein in the N-terminal section; belongs to the N-acetylglucosamine-1-phosphate uridyltransferase family. It in the C-terminal section; belongs to the transferase hexapeptide repeat family. Homotrimer. Mg(2+) serves as cofactor.

It is found in the cytoplasm. The enzyme catalyses alpha-D-glucosamine 1-phosphate + acetyl-CoA = N-acetyl-alpha-D-glucosamine 1-phosphate + CoA + H(+). It catalyses the reaction N-acetyl-alpha-D-glucosamine 1-phosphate + UTP + H(+) = UDP-N-acetyl-alpha-D-glucosamine + diphosphate. Its pathway is nucleotide-sugar biosynthesis; UDP-N-acetyl-alpha-D-glucosamine biosynthesis; N-acetyl-alpha-D-glucosamine 1-phosphate from alpha-D-glucosamine 6-phosphate (route II): step 2/2. It participates in nucleotide-sugar biosynthesis; UDP-N-acetyl-alpha-D-glucosamine biosynthesis; UDP-N-acetyl-alpha-D-glucosamine from N-acetyl-alpha-D-glucosamine 1-phosphate: step 1/1. The protein operates within bacterial outer membrane biogenesis; LPS lipid A biosynthesis. Its function is as follows. Catalyzes the last two sequential reactions in the de novo biosynthetic pathway for UDP-N-acetylglucosamine (UDP-GlcNAc). The C-terminal domain catalyzes the transfer of acetyl group from acetyl coenzyme A to glucosamine-1-phosphate (GlcN-1-P) to produce N-acetylglucosamine-1-phosphate (GlcNAc-1-P), which is converted into UDP-GlcNAc by the transfer of uridine 5-monophosphate (from uridine 5-triphosphate), a reaction catalyzed by the N-terminal domain. This Brucella anthropi (strain ATCC 49188 / DSM 6882 / CCUG 24695 / JCM 21032 / LMG 3331 / NBRC 15819 / NCTC 12168 / Alc 37) (Ochrobactrum anthropi) protein is Bifunctional protein GlmU.